Consider the following 237-residue polypeptide: Synapse differentiation-inducing gene protein 1-like (237 aa).

Disordered stretches follow at residues 1-23, 84-111, and 127-148; these read MESL…HRPY, AGSC…PGQA, and ELQG…ESEC. The Extracellular segment spans residues 1–161; the sequence is MESLSELQNP…FLTLPPRDHL (161 aa). The span at 129-148 shows a compositional bias: acidic residues; it reads QGQEDSQEEESDGTSSESEC. Residues 162–182 traverse the membrane as a helical segment; sequence GLTLFSMLCCFWPLGIAAFYF. Topologically, residues 183–204 are cytoplasmic; sequence SQGTSKAISKGDFRLASTTSRR. A helical transmembrane segment spans residues 205–225; the sequence is ALFLATLSIAVGAGLYVAVVV. The Extracellular segment spans residues 226–237; that stretch reads ALAAYMSQNGHG.

Belongs to the CD225/Dispanin family. In terms of tissue distribution, expression is restricted to the caudate-putamen. Down-regulated in R6/2 transgenic mice, a model for Huntington disease.

The protein resides in the membrane. The protein localises to the golgi apparatus. It localises to the cis-Golgi network. The protein is Synapse differentiation-inducing gene protein 1-like (Syndig1l) of Mus musculus (Mouse).